The sequence spans 828 residues: MKMTRRAFVKANAAASAAAVAGITLPASAANLIVSSDETKIKWDKAPCRFCGTGCSVLVGTQNGRVVATQGDPEAPVNKGLNCIKGYFLSKIMYGKDRLQTPMLRMKNGEYNKEGDFAPVSWDQAFDVMAEKFKKALKEKGPTSVGMFGSGQWTVMEGYAASKMMKAGFRSNNIDPNARHCMASAVGGFMRTFGIDEPMGCYDDFEHADSFVLWGSNMAEMHPVLWTRITDRRLSHPHVKVNVLSTYYHRSFELADNGMIFEPQTDLAIANFIANYIIQNDAVNWDFVTKHTHFKRAETDIGYGLRDDNPLQMKAKHPNSGALHPMDFEQYKASVAEYTVEKASQMSGVSEEKLIEMAKQYADPKVKVMSLWTMGMNQHTRGVWMNSLVYNIHLLTGKISQPGNSPFSLTGQPSACGTAREVGTFSHRLPADMVVANPKHRAIAEKIWKLPDGTIPAKPGYHAVQQDRMLKDGKLNAYWVMCNNNMQAGPNINEERLPGYRNPENFIVCSDPYPTVTAQASDLILPTAMWVEKEGAYGNAERRTQAWYQQVKSQGDSKSDLWQLMEFSKRFKIEEVWGEDLLAQMPEYRGKTMYEVLFRNGQVDKFPLSEAQELNDDAKAQGFYLQKGLFEEYAAFGRGHGHDLAPYDVYHQVRGLRWPVVDGKETLWRFVEGSDPYVPEGEGFRFYGKPDGKANIIFAPFEPAPEEPDQEYDMWLCTGRVLEHWHTGTMTRRVPELYKAVPDALCFIHPDDAQKRGLRRGDEVLLESRRGEVRCRVETRGRNRPPVGLVFVPFFDARVLVNKLILDATDPLSKQTDYKKCPIKITKV.

Residues 1–30 (MKMTRRAFVKANAAASAAAVAGITLPASAA) constitute a signal peptide (tat-type signal). Residues 41–97 (IKWDKAPCRFCGTGCSVLVGTQNGRVVATQGDPEAPVNKGLNCIKGYFLSKIMYGKD) form the 4Fe-4S Mo/W bis-MGD-type domain. The [4Fe-4S] cluster site is built by cysteine 48, cysteine 51, cysteine 55, and cysteine 83. Residues lysine 85, glutamine 152, asparagine 177, cysteine 181, 214 to 221 (WGSNMAEM), 245 to 249 (STYYH), 264 to 266 (QTD), methionine 374, glutamine 378, asparagine 484, 510 to 511 (SD), lysine 533, aspartate 560, and 718 to 727 (TGRVLEHWHT) each bind Mo-bis(molybdopterin guanine dinucleotide). Phenylalanine 794 serves as a coordination point for substrate. 2 residues coordinate Mo-bis(molybdopterin guanine dinucleotide): asparagine 802 and lysine 819.

The protein belongs to the prokaryotic molybdopterin-containing oxidoreductase family. NasA/NapA/NarB subfamily. As to quaternary structure, component of the periplasmic nitrate reductase NapAB complex composed of NapA and NapB. [4Fe-4S] cluster serves as cofactor. The cofactor is Mo-bis(molybdopterin guanine dinucleotide). Post-translationally, predicted to be exported by the Tat system. The position of the signal peptide cleavage has not been experimentally proven.

The protein localises to the periplasm. The enzyme catalyses 2 Fe(II)-[cytochrome] + nitrate + 2 H(+) = 2 Fe(III)-[cytochrome] + nitrite + H2O. In terms of biological role, catalytic subunit of the periplasmic nitrate reductase complex NapAB. Receives electrons from NapB and catalyzes the reduction of nitrate to nitrite. This Photobacterium profundum (strain SS9) protein is Periplasmic nitrate reductase 1.